A 26-amino-acid chain; its full sequence is Conotoxin Eb6.18 (26 aa).

2 disulfides stabilise this stretch: Cys7–Cys18 and Cys13–Cys25.

This sequence belongs to the conotoxin O1 superfamily. Expressed by the venom duct.

It is found in the secreted. This is Conotoxin Eb6.18 (E1) from Conus ebraeus (Hebrew cone).